A 291-amino-acid chain; its full sequence is Neugrin (291 aa).

An N-terminal signal peptide occupies residues 1 to 15 (MAVTLSLLLGGRVCA). 2 disordered regions span residues 26 to 48 (GVAGPGPIGREPDPDSDWEPEER) and 155 to 270 (GSGN…DNFS). Ser-41 carries the phosphoserine modification. N-linked (GlcNAc...) asparagine glycans are attached at residues Asn-158 and Asn-186. Residues 236 to 246 (KYSSDSESPRG) show a composition bias toward polar residues. Residue Asn-268 is glycosylated (N-linked (GlcNAc...) asparagine).

This sequence belongs to the neugrin family. Forms a regulatory protein-RNA complex, consisting of RCC1L, NGRN, RPUSD3, RPUSD4, TRUB2, FASTKD2 and 16S mt-rRNA. Interacts with 16S mt-rRNA; this interaction is direct. In terms of tissue distribution, expressed at high levels in heart, brain and skeletal muscle. In brain, mainly expressed in neurons rather than glial cells.

The protein localises to the nucleus. The protein resides in the secreted. Its subcellular location is the mitochondrion membrane. In terms of biological role, plays an essential role in mitochondrial ribosome biogenesis. As a component of a functional protein-RNA module, consisting of RCC1L, NGRN, RPUSD3, RPUSD4, TRUB2, FASTKD2 and 16S mitochondrial ribosomal RNA (16S mt-rRNA), controls 16S mt-rRNA abundance and is required for intra-mitochondrial translation of core subunits of the oxidative phosphorylation system. The polypeptide is Neugrin (Homo sapiens (Human)).